A 946-amino-acid chain; its full sequence is Bifunctional glutamine synthetase adenylyltransferase/adenylyl-removing enzyme (946 aa).

The interval 1 to 440 (MKPLSSPLQQ…VFNELIGDDE (440 aa)) is adenylyl removase. Residues 449–946 (SEQWRELWQD…ASWQKWLVEE (498 aa)) are adenylyl transferase.

This sequence belongs to the GlnE family. Mg(2+) is required as a cofactor.

It catalyses the reaction [glutamine synthetase]-O(4)-(5'-adenylyl)-L-tyrosine + phosphate = [glutamine synthetase]-L-tyrosine + ADP. The enzyme catalyses [glutamine synthetase]-L-tyrosine + ATP = [glutamine synthetase]-O(4)-(5'-adenylyl)-L-tyrosine + diphosphate. In terms of biological role, involved in the regulation of glutamine synthetase GlnA, a key enzyme in the process to assimilate ammonia. When cellular nitrogen levels are high, the C-terminal adenylyl transferase (AT) inactivates GlnA by covalent transfer of an adenylyl group from ATP to specific tyrosine residue of GlnA, thus reducing its activity. Conversely, when nitrogen levels are low, the N-terminal adenylyl removase (AR) activates GlnA by removing the adenylyl group by phosphorolysis, increasing its activity. The regulatory region of GlnE binds the signal transduction protein PII (GlnB) which indicates the nitrogen status of the cell. The polypeptide is Bifunctional glutamine synthetase adenylyltransferase/adenylyl-removing enzyme (Shigella dysenteriae serotype 1 (strain Sd197)).